The chain runs to 266 residues: tRNA pseudouridine synthase A (266 aa).

The Nucleophile role is filled by aspartate 56. Tyrosine 110 is a binding site for substrate.

It belongs to the tRNA pseudouridine synthase TruA family.

The enzyme catalyses uridine(38/39/40) in tRNA = pseudouridine(38/39/40) in tRNA. Its function is as follows. Formation of pseudouridine at positions 38, 39 and 40 in the anticodon stem and loop of transfer RNAs. The polypeptide is tRNA pseudouridine synthase A (Halobacterium salinarum (strain ATCC 29341 / DSM 671 / R1)).